A 397-amino-acid polypeptide reads, in one-letter code: DNA-directed RNA polymerase subunit Rpo1C (397 aa).

The protein belongs to the RNA polymerase beta' chain family. Part of the RNA polymerase complex.

It is found in the cytoplasm. The catalysed reaction is RNA(n) + a ribonucleoside 5'-triphosphate = RNA(n+1) + diphosphate. DNA-dependent RNA polymerase (RNAP) catalyzes the transcription of DNA into RNA using the four ribonucleoside triphosphates as substrates. Forms part of the jaw domain. The chain is DNA-directed RNA polymerase subunit Rpo1C from Pyrococcus horikoshii (strain ATCC 700860 / DSM 12428 / JCM 9974 / NBRC 100139 / OT-3).